Consider the following 160-residue polypeptide: Ribonuclease HI (160 aa).

In terms of domain architecture, RNase H type-1 spans 4–147 (TPNSVTLYTD…CDRLAVAAYQ (144 aa)). Positions 13, 52, 74, and 139 each coordinate Mg(2+).

The protein belongs to the RNase H family. Monomer. Mg(2+) is required as a cofactor.

The protein resides in the cytoplasm. It catalyses the reaction Endonucleolytic cleavage to 5'-phosphomonoester.. Its function is as follows. Endonuclease that specifically degrades the RNA of RNA-DNA hybrids. In Synechocystis sp. (strain ATCC 27184 / PCC 6803 / Kazusa), this protein is Ribonuclease HI (rnhA).